A 60-amino-acid chain; its full sequence is uncharacterized protein (60 aa).

The chain crosses the membrane as a helical span at residues 33–55 (FRLLRGIFLITLVIWTVVWLKLL).

The protein belongs to the HHV-5 UL2 protein family.

The protein localises to the host membrane. This is an uncharacterized protein from Human cytomegalovirus (strain AD169) (HHV-5).